The following is a 486-amino-acid chain: Glutamyl-tRNA(Gln) amidotransferase subunit A (486 aa).

Catalysis depends on charge relay system residues lysine 75 and serine 150. The active-site Acyl-ester intermediate is the serine 174.

This sequence belongs to the amidase family. GatA subfamily. In terms of assembly, heterotrimer of A, B and C subunits.

The enzyme catalyses L-glutamyl-tRNA(Gln) + L-glutamine + ATP + H2O = L-glutaminyl-tRNA(Gln) + L-glutamate + ADP + phosphate + H(+). Allows the formation of correctly charged Gln-tRNA(Gln) through the transamidation of misacylated Glu-tRNA(Gln) in organisms which lack glutaminyl-tRNA synthetase. The reaction takes place in the presence of glutamine and ATP through an activated gamma-phospho-Glu-tRNA(Gln). The protein is Glutamyl-tRNA(Gln) amidotransferase subunit A of Trichormus variabilis (strain ATCC 29413 / PCC 7937) (Anabaena variabilis).